The chain runs to 385 residues: Flap endonuclease 1 (385 aa).

The N-domain stretch occupies residues 1–104 (MGILGLSKLI…GELAKRAERR (104 aa)). Asp34 serves as a coordination point for Mg(2+). DNA-binding residues include Arg47 and Arg70. Positions 86, 158, 160, 179, and 181 each coordinate Mg(2+). Residues 122-253 (GIEKFNRRLV…KRAIELINTY (132 aa)) form an I-domain region. Glu158 is a binding site for DNA. DNA-binding residues include Gly231 and Asp233. Mg(2+) is bound at residue Asp233. The interval 336–344 (TQVRLDSFF) is interaction with PCNA. A disordered region spans residues 346 to 385 (TLPSTPNATNAAKRKAEEAKKSANNKKAKTSGGGRGRRPK). The segment covering 368–385 (ANNKKAKTSGGGRGRRPK) has biased composition (basic residues).

This sequence belongs to the XPG/RAD2 endonuclease family. FEN1 subfamily. Interacts with PCNA. Three molecules of FEN1 bind to one PCNA trimer with each molecule binding to one PCNA monomer. PCNA stimulates the nuclease activity without altering cleavage specificity. Mg(2+) is required as a cofactor. In terms of processing, phosphorylated. Phosphorylation upon DNA damage induces relocalization to the nuclear plasma.

Its subcellular location is the nucleus. The protein resides in the nucleolus. It localises to the nucleoplasm. The protein localises to the mitochondrion. In terms of biological role, structure-specific nuclease with 5'-flap endonuclease and 5'-3' exonuclease activities involved in DNA replication and repair. During DNA replication, cleaves the 5'-overhanging flap structure that is generated by displacement synthesis when DNA polymerase encounters the 5'-end of a downstream Okazaki fragment. It enters the flap from the 5'-end and then tracks to cleave the flap base, leaving a nick for ligation. Also involved in the long patch base excision repair (LP-BER) pathway, by cleaving within the apurinic/apyrimidinic (AP) site-terminated flap. Acts as a genome stabilization factor that prevents flaps from equilibrating into structures that lead to duplications and deletions. Also possesses 5'-3' exonuclease activity on nicked or gapped double-stranded DNA, and exhibits RNase H activity. Also involved in replication and repair of rDNA and in repairing mitochondrial DNA. In Drosophila melanogaster (Fruit fly), this protein is Flap endonuclease 1.